Reading from the N-terminus, the 195-residue chain is Small ribosomal subunit protein uS5 (195 aa).

The tract at residues 1–20 is disordered; sequence MAREREGGGRGRREDREERD. One can recognise an S5 DRBM domain in the interval 23–86; that stretch reads FVDKLVHINR…EAAKRGLIRV (64 aa). A disordered region spans residues 161–195; sequence DSPRSVAARRGIKVSTLQSRRRDADPADQSEAAVA.

This sequence belongs to the universal ribosomal protein uS5 family. In terms of assembly, part of the 30S ribosomal subunit. Contacts proteins S4 and S8.

With S4 and S12 plays an important role in translational accuracy. Functionally, located at the back of the 30S subunit body where it stabilizes the conformation of the head with respect to the body. This chain is Small ribosomal subunit protein uS5, found in Methylobacterium radiotolerans (strain ATCC 27329 / DSM 1819 / JCM 2831 / NBRC 15690 / NCIMB 10815 / 0-1).